Here is a 95-residue protein sequence, read N- to C-terminus: Co-chaperonin GroES (95 aa).

The protein belongs to the GroES chaperonin family. In terms of assembly, heptamer of 7 subunits arranged in a ring. Interacts with the chaperonin GroEL.

Its subcellular location is the cytoplasm. Its function is as follows. Together with the chaperonin GroEL, plays an essential role in assisting protein folding. The GroEL-GroES system forms a nano-cage that allows encapsulation of the non-native substrate proteins and provides a physical environment optimized to promote and accelerate protein folding. GroES binds to the apical surface of the GroEL ring, thereby capping the opening of the GroEL channel. This is Co-chaperonin GroES from Streptococcus uberis (strain ATCC BAA-854 / 0140J).